The sequence spans 72 residues: Crustacean hyperglycemic hormone (72 aa).

The residue at position 1 (Q1) is a Pyrrolidone carboxylic acid. The residue at position 3 (F3) is a D-phenylalanine; in form CHH-II. Intrachain disulfides connect C7/C43, C23/C39, and C26/C52. At V72 the chain carries Valine amide.

In terms of processing, stereoinversion of L-Phe (in CHH-I) to D-Phe (in CHH-II) the two forms are present in a ratio 3:1 (CHH-I/CHH-II). In terms of tissue distribution, produced by the medulla terminalis X-organ in the eyestalks and transported to the sinus gland where they are stored and released.

The protein localises to the secreted. Functionally, hormone found in the sinus gland of isopods and decapods which controls the blood sugar level. Has a secretagogue action over the amylase released from the midgut gland. May act as a stress hormone and may be involved in the control of molting and reproduction. The polypeptide is Crustacean hyperglycemic hormone (Procambarus bouvieri (Mexican crayfish)).